A 394-amino-acid chain; its full sequence is Elongation factor Tu (394 aa).

In terms of domain architecture, tr-type G spans 10 to 204 (KPHINIGTIG…AVDDNIPTPE (195 aa)). The G1 stretch occupies residues 19 to 26 (GHVDHGKT). A GTP-binding site is contributed by 19 to 26 (GHVDHGKT). Position 26 (Thr-26) interacts with Mg(2+). The interval 60–64 (GITIN) is G2. Residues 81–84 (DCPG) form a G3 region. Residues 81–85 (DCPGH) and 136–139 (NKID) each bind GTP. The tract at residues 136-139 (NKID) is G4. The segment at 174–176 (SAL) is G5.

It belongs to the TRAFAC class translation factor GTPase superfamily. Classic translation factor GTPase family. EF-Tu/EF-1A subfamily. In terms of assembly, monomer.

Its subcellular location is the cytoplasm. It catalyses the reaction GTP + H2O = GDP + phosphate + H(+). In terms of biological role, GTP hydrolase that promotes the GTP-dependent binding of aminoacyl-tRNA to the A-site of ribosomes during protein biosynthesis. This Chlamydia trachomatis serovar L2 (strain ATCC VR-902B / DSM 19102 / 434/Bu) protein is Elongation factor Tu.